The following is an 83-amino-acid chain: Small ribosomal subunit protein uS17c (83 aa).

The protein belongs to the universal ribosomal protein uS17 family. As to quaternary structure, part of the 30S ribosomal subunit.

It localises to the plastid. The protein localises to the chloroplast. One of the primary rRNA binding proteins, it binds specifically to the 5'-end of 16S ribosomal RNA. The protein is Small ribosomal subunit protein uS17c (rps17) of Porphyra purpurea (Red seaweed).